A 923-amino-acid chain; its full sequence is RNA polymerase-associated protein RapA (923 aa).

Positions 162–332 (EVGNRVNPRV…FARLRLLDPE (171 aa)) constitute a Helicase ATP-binding domain. Position 175–182 (175–182 (DEVGLGKT)) interacts with ATP. The short motif at 278–281 (DEAH) is the DEAH box element. Residues 443–597 (KIDWLIDFLK…TCPMGMALFS (155 aa)) form the Helicase C-terminal domain.

The protein belongs to the SNF2/RAD54 helicase family. RapA subfamily. As to quaternary structure, interacts with the RNAP. Has a higher affinity for the core RNAP than for the holoenzyme. Its ATPase activity is stimulated by binding to RNAP.

Its function is as follows. Transcription regulator that activates transcription by stimulating RNA polymerase (RNAP) recycling in case of stress conditions such as supercoiled DNA or high salt concentrations. Probably acts by releasing the RNAP, when it is trapped or immobilized on tightly supercoiled DNA. Does not activate transcription on linear DNA. Probably not involved in DNA repair. The polypeptide is RNA polymerase-associated protein RapA (Haemophilus influenzae (strain PittEE)).